Reading from the N-terminus, the 589-residue chain is MSKGHSDHPSAGESWHLYKRIFGFIKPYWRLGVLAIVCMVLAAAGQAAFAWIIQPLVDGTFIEQDPGARLWVPATLVGIFLFHGVTTFASDYTVAWVGRRVVKDVRQAVFEQYLRLPTSYFDKNSPGTLLAKLTYNVNQISAAASKAVVVLVRDTFTVIFLLAYMTYLSGWLVMIVFGLGPLVAVVVTAANKRFRKLSRRMQASVGEYAQIAEDGIRGQAEVKIFGGQRYEAERFDRTNTRHHRQLMRYKAVQAASQPLAQLGAVIALAIILYLATMDVILETISPGGMISFIAAMLLMLPPLKRVIGVNAEIQKALAAGESVFEVLDAPPEPDHGQRPLERARGLIEFDRVAFRYPESEDWVLRDINLSIQPGETVALVGRSGSGKTTLASLLPRFYDPQRGEIRLDGHPLAEYRLQALRSQMSLVNQQVVLFNDSLANNIAYGLSERPTAAQLQAAARAANALEFIEELPEGFDTVIGENGVMLSGGQRQRIAIARALLKDAPILILDEATSALDSESEKRIQEALEKLMRGRTTLVIAHRLSTIEDADRIVVLDAGRVVETGTHRELLDHNGHYASLHRVQFNGPS.

Transmembrane regions (helical) follow at residues valine 33–isoleucine 53, leucine 70–serine 90, valine 148–leucine 168, glycine 170–alanine 190, leucine 262–glutamate 282, and threonine 283–leucine 303. Residues valine 33 to lysine 315 enclose the ABC transmembrane type-1 domain. The region spanning isoleucine 347–valine 583 is the ABC transporter domain. ATP is bound at residue glycine 381–threonine 388.

The protein belongs to the ABC transporter superfamily. Lipid exporter (TC 3.A.1.106) family. In terms of assembly, homodimer.

The protein localises to the cell inner membrane. The enzyme catalyses ATP + H2O + lipid A-core oligosaccharideSide 1 = ADP + phosphate + lipid A-core oligosaccharideSide 2.. Involved in lipopolysaccharide (LPS) biosynthesis. Translocates lipid A-core from the inner to the outer leaflet of the inner membrane. Transmembrane domains (TMD) form a pore in the inner membrane and the ATP-binding domain (NBD) is responsible for energy generation. The protein is ATP-dependent lipid A-core flippase of Alkalilimnicola ehrlichii (strain ATCC BAA-1101 / DSM 17681 / MLHE-1).